The chain runs to 166 residues: Large ribosomal subunit protein uL10 (166 aa).

The protein belongs to the universal ribosomal protein uL10 family. Part of the ribosomal stalk of the 50S ribosomal subunit. The N-terminus interacts with L11 and the large rRNA to form the base of the stalk. The C-terminus forms an elongated spine to which L12 dimers bind in a sequential fashion forming a multimeric L10(L12)X complex.

Functionally, forms part of the ribosomal stalk, playing a central role in the interaction of the ribosome with GTP-bound translation factors. The sequence is that of Large ribosomal subunit protein uL10 from Ureaplasma parvum serovar 3 (strain ATCC 27815 / 27 / NCTC 11736).